We begin with the raw amino-acid sequence, 312 residues long: MGRCRVLVVGGTGYIGKRIVKASIEHGHDTYVLKRPETGLDIEKFQLLLSFKKQGAHLVEASFSDHESLVRAVKLVDVVICTVSGAHSRSLLLQLKLVEAIKEAGNVKRFIPSEFGMDPARMGDALEPGRETFDLKMVVRKAIEDANIPHTYISANCFGGYFVGNLSQLGPLTPPSDKVTIYGDGNVKVVYMDEDDVATYTIMTIEDDRTLNKTMYLRPPENVITHRQLVETWEKLSGNQLQKTELSSQDFLALMEGKDVAEQVVIGHLYHIYYEGCLTNFDIDAAQDQVEASSLYPEVEYIRMKDYLMIYL.

Residues 10-16, arginine 35, and lysine 44 each bind NADP(+); that span reads GGTGYIG. Lysine 136 functions as the Proton acceptor in the catalytic mechanism. Position 140 (arginine 140) interacts with NADP(+). Residue histidine 268 coordinates substrate.

The protein belongs to the NmrA-type oxidoreductase family. Isoflavone reductase subfamily. As to quaternary structure, dimer. As to expression, expressed in seeds and roots, but not in stems. Detected in leaves.

It carries out the reaction (-)-lariciresinol + NADP(+) = (-)-pinoresinol + NADPH + H(+). It catalyses the reaction (+)-secoisolariciresinol + NADP(+) = (-)-lariciresinol + NADPH + H(+). In terms of biological role, reductase involved in lignan biosynthesis. Catalyzes the enantioselective conversion of (-)-pinoresinol into (-)-lariciresinol and of (-)-lariciresinol into (+)-secoisolariciresinol. Abstracts the 4R-hydride from the NADPH cofactor during catalysis. This is Bifunctional pinoresinol-lariciresinol reductase 1 (PLR_Lu1) from Linum usitatissimum (Flax).